Here is a 1027-residue protein sequence, read N- to C-terminus: Transient-receptor-potential-like protein (1027 aa).

Residues 1–22 (MTKEGMLSAAGRRFSRCAPSPR) form a disordered region. 3 ANK repeats span residues 85–115 (MGRT…RIGN), 117–141 (LLCA…ITRE), and 163–192 (SDIS…SIEK). A run of 6 helical transmembrane segments spans residues 355 to 375 (FFLY…YILM), 391 to 411 (FFYY…ATFE), 473 to 493 (FLMI…YYIF), 516 to 536 (VAEA…IYLF), 559 to 579 (FCFI…QLYW), and 640 to 660 (MFIM…IAMM). 2 disordered regions span residues 825–929 (KRDI…TYTS) and 1008–1027 (ENVK…NVEK). A compositionally biased stretch (acidic residues) spans 855–874 (EESEEDDKSDETSSTDEEAD). Residues 910-923 (RASEADSKLPDRPL) show a composition bias toward basic and acidic residues. Over residues 1008 to 1017 (ENVKSPSPAS) the composition is skewed to polar residues.

Belongs to the transient receptor (TC 1.A.4) family. STrpC subfamily.

The protein resides in the membrane. Its function is as follows. Could mediate calcium entry and form a calcium permeant channel. The protein is Transient-receptor-potential-like protein (trp-1) of Caenorhabditis elegans.